We begin with the raw amino-acid sequence, 75 residues long: Small integral membrane protein 7 (75 aa).

The signal sequence occupies residues 1 to 17 (MIGDILLFGTLLMNAGA). Residues 18 to 53 (VLNFKLKKKDTQGFGEESKEPSTGDNIREFLLSLRY) are Extracellular-facing. The helical transmembrane segment at 54–74 (FRIFIALWNVFMMLCMIVLFG) threads the bilayer. Position 75 (Ser75) is a topological domain, cytoplasmic.

This sequence belongs to the SMIM7 family.

The protein resides in the membrane. The protein is Small integral membrane protein 7 (Smim7) of Mus musculus (Mouse).